The following is a 73-amino-acid chain: MSEKEAGIEVQGTVEEALAGGMYRVKVDQGPVVLAYASGKMKKFHIRIIPGDRVKLELSPYDLSRGRITYRDK.

Residues 1 to 73 form the S1-like domain; the sequence is MSEKEAGIEV…SRGRITYRDK (73 aa).

It belongs to the IF-1 family. In terms of assembly, component of the 30S ribosomal translation pre-initiation complex which assembles on the 30S ribosome in the order IF-2 and IF-3, IF-1 and N-formylmethionyl-tRNA(fMet); mRNA recruitment can occur at any time during PIC assembly.

It is found in the cytoplasm. In terms of biological role, one of the essential components for the initiation of protein synthesis. Stabilizes the binding of IF-2 and IF-3 on the 30S subunit to which N-formylmethionyl-tRNA(fMet) subsequently binds. Helps modulate mRNA selection, yielding the 30S pre-initiation complex (PIC). Upon addition of the 50S ribosomal subunit IF-1, IF-2 and IF-3 are released leaving the mature 70S translation initiation complex. The sequence is that of Translation initiation factor IF-1 from Anaeromyxobacter dehalogenans (strain 2CP-C).